The sequence spans 275 residues: Melanoma-associated antigen B5 (275 aa).

The disordered stretch occupies residues 1–33 (MTSAGVFNAGSDERANSRDEEYPCSSEVSPSTE). Positions 11–21 (SDERANSRDEE) are enriched in basic and acidic residues. The span at 23 to 33 (PCSSEVSPSTE) shows a compositional bias: low complexity. One can recognise an MAGE domain in the interval 40–239 (INIKVGLLEQ…GAFSSQYEEA (200 aa)).

Expressed in testis. Not expressed in other normal tissues, but is expressed in tumors of different histological origins.

This chain is Melanoma-associated antigen B5 (MAGEB5), found in Homo sapiens (Human).